Here is a 334-residue protein sequence, read N- to C-terminus: Methionine import ATP-binding protein MetN (334 aa).

The region spanning 7–246 is the ABC transporter domain; sequence VEFRSVSKVF…PRSAPARAFV (240 aa). 43 to 50 is an ATP binding site; the sequence is GYSGAGKS.

The protein belongs to the ABC transporter superfamily. Methionine importer (TC 3.A.1.24) family. The complex is composed of two ATP-binding proteins (MetN), two transmembrane proteins (MetI) and a solute-binding protein (MetQ).

Its subcellular location is the cell membrane. The enzyme catalyses L-methionine(out) + ATP + H2O = L-methionine(in) + ADP + phosphate + H(+). The catalysed reaction is D-methionine(out) + ATP + H2O = D-methionine(in) + ADP + phosphate + H(+). Its function is as follows. Part of the ABC transporter complex MetNIQ involved in methionine import. Responsible for energy coupling to the transport system. This chain is Methionine import ATP-binding protein MetN, found in Nocardia farcinica (strain IFM 10152).